Consider the following 1888-residue polypeptide: Protein mms22 (1888 aa).

3 disordered regions span residues 12–34 (DSQD…RGNE), 151–258 (FSSD…ISSN), and 316–354 (RRKL…SRFD). Composition is skewed to polar residues over residues 13 to 32 (SQDS…SQRG), 212 to 227 (SNLN…SSTI), and 338 to 348 (SDNSISTPTPT).

Belongs to the MMS22 family.

Its subcellular location is the nucleus. Functionally, involved in protection against replication-dependent DNA damage. May act by restoring active replication forks, repairing unusual DNA structures, and/or preventing aberrant DNA rearrangement at arrested replication forks. The polypeptide is Protein mms22 (mus7) (Schizosaccharomyces pombe (strain 972 / ATCC 24843) (Fission yeast)).